A 385-amino-acid polypeptide reads, in one-letter code: MAFRKSNVYLSLVNSYLIDSPQPSTINYWWNLGSLLGLCLVIQILTGIFMAMHYSSNIELAFSSVEHIMRDVQYGWLLRYMHANGASFFFICMYMHIAKGLYYGSYRSPRVTVWIVGVIIFVLTMAAAFLGYCCVYGQMSHWGATVITNLFSAIPFVGQDIVQWLWGGFSVSNPTIQRFFALHYLVPFIIAALVVMHFMALHVHGSSNPLGITGNMDRIGMHGYFIFKDLITVFVFLIFFSLFVFFSPNTLGHPDNYIPGNPLVTPASIVPEWYLLPFYAILRSIPDKLLGVITMFAAILVLLVLPITDRSVVRGNTFKVLSKFFFFLFIFNFLLLGQIGQLHIEPPFVLMGQIATFLYFAYFIIIVPIISTIENVLFYIGRVNN.

4 helical membrane-spanning segments follow: residues 32-52 (LGSLLGLCLVIQILTGIFMAM), 76-98 (WLLRYMHANGASFFFICMYMHIA), 113-133 (VWIVGVIIFVLTMAAAFLGYC), and 179-199 (FFALHYLVPFIIAALVVMHFM). Heme b is bound by residues His-82 and His-96. Residues His-183 and His-197 each contribute to the heme b site. His-202 lines the a ubiquinone pocket. 4 consecutive transmembrane segments (helical) span residues 225 to 245 (FIFKDLITVFVFLIFFSLFVF), 289 to 309 (LLGVITMFAAILVLLVLPITD), 321 to 341 (LSKFFFFLFIFNFLLLGQIGQ), and 348 to 368 (FVLMGQIATFLYFAYFIIIVP).

The protein belongs to the cytochrome b family. As to quaternary structure, fungal cytochrome b-c1 complex contains 10 subunits; 3 respiratory subunits, 2 core proteins and 5 low-molecular weight proteins. Cytochrome b-c1 complex is a homodimer. Heme b serves as cofactor.

The protein resides in the mitochondrion inner membrane. Its function is as follows. Component of the ubiquinol-cytochrome c reductase complex (complex III or cytochrome b-c1 complex) that is part of the mitochondrial respiratory chain. The b-c1 complex mediates electron transfer from ubiquinol to cytochrome c. Contributes to the generation of a proton gradient across the mitochondrial membrane that is then used for ATP synthesis. The protein is Cytochrome b (COB) of Candida glabrata (strain ATCC 2001 / BCRC 20586 / JCM 3761 / NBRC 0622 / NRRL Y-65 / CBS 138) (Yeast).